A 35-amino-acid chain; its full sequence is Small toxic polypeptide LdrB (35 aa).

The helical transmembrane segment at 10-30 threads the bilayer; the sequence is FWHDLAAPILAGIITAAIVGW.

It belongs to the Ldr toxic peptide family.

It localises to the cell inner membrane. Toxic component of a type I toxin-antitoxin (TA) system. Overexpression causes rapid cell killing, probably by disrupting the cell inner membrane and disruption of ATP synthesis. The sequence is that of Small toxic polypeptide LdrB (ldrB) from Escherichia coli (strain K12).